We begin with the raw amino-acid sequence, 392 residues long: Outer membrane protein assembly factor BamB (392 aa).

A signal peptide spans 1 to 19; that stretch reads MQLRKLLLPGLLSVTLLSG. Residue Cys20 is the site of N-palmitoyl cysteine attachment. Cys20 carries S-diacylglycerol cysteine lipidation.

It belongs to the BamB family. In terms of assembly, part of the Bam complex, which is composed of the outer membrane protein BamA, and four lipoproteins BamB, BamC, BamD and BamE.

It is found in the cell outer membrane. Its function is as follows. Part of the outer membrane protein assembly complex, which is involved in assembly and insertion of beta-barrel proteins into the outer membrane. This chain is Outer membrane protein assembly factor BamB, found in Shigella dysenteriae serotype 1 (strain Sd197).